Consider the following 111-residue polypeptide: Putative carnobacteriocin-B2 immunity protein (111 aa).

Functionally, could impart immunity to carnobacteriocin-B2 to naturally sensitive host strains. The polypeptide is Putative carnobacteriocin-B2 immunity protein (Carnobacterium maltaromaticum (Carnobacterium piscicola)).